The sequence spans 393 residues: Putative N(4)-(beta-N-acetylglucosaminyl)-L-asparaginase CG1827 (393 aa).

Residues 1–23 (MRRHLRASLWILCLATMAFSILA) form the signal peptide. Asn49 and Asn64 each carry an N-linked (GlcNAc...) asparagine glycan. Disulfide bonds link Cys97–Cys102 and Cys196–Cys212. Thr243 (nucleophile) is an active-site residue. Residues 271-274 (RVGD) and 294-297 (TGDG) each bind substrate. A disulfide bridge connects residues Cys354 and Cys381.

Belongs to the Ntn-hydrolase family. As to quaternary structure, heterotetramer of two alpha and two beta chains arranged as a dimer of alpha/beta heterodimers. Cleaved into an alpha and beta chain by autocatalysis; this activates the enzyme. The N-terminal residue of the beta subunit is responsible for the nucleophile hydrolase activity.

It carries out the reaction N(4)-(beta-N-acetyl-D-glucosaminyl)-L-asparagine + H2O = N-acetyl-beta-D-glucosaminylamine + L-aspartate + H(+). Cleaves the GlcNAc-Asn bond which joins oligosaccharides to the peptide of asparagine-linked glycoproteins. This Drosophila melanogaster (Fruit fly) protein is Putative N(4)-(beta-N-acetylglucosaminyl)-L-asparaginase CG1827.